The primary structure comprises 376 residues: TATA box-binding protein-like 2 (376 aa).

The tract at residues 103-184 (PDEVTQENKD…SDSLSLASIT (82 aa)) is disordered. Residues 108–122 (QENKDQPVISKHETE) show a composition bias toward basic and acidic residues. The span at 126–159 (ESQSPQSRLPSPSEQDVGLGLNSSSLSNSHSQLH) shows a compositional bias: low complexity. Over residues 175–184 (SDSLSLASIT) the composition is skewed to polar residues.

It belongs to the TBP family. In terms of assembly, interacts with TAF3.

The protein resides in the cytoplasm. It is found in the nucleus. In terms of biological role, transcription factor required in complex with TAF3 for the differentiation of myoblasts into myocytes. The complex replaces TFIID at specific promoters at an early stage in the differentiation process. The chain is TATA box-binding protein-like 2 from Pan troglodytes (Chimpanzee).